A 374-amino-acid chain; its full sequence is Aminomethyltransferase (374 aa).

The protein belongs to the GcvT family. As to quaternary structure, the glycine cleavage system is composed of four proteins: P, T, L and H.

The enzyme catalyses N(6)-[(R)-S(8)-aminomethyldihydrolipoyl]-L-lysyl-[protein] + (6S)-5,6,7,8-tetrahydrofolate = N(6)-[(R)-dihydrolipoyl]-L-lysyl-[protein] + (6R)-5,10-methylene-5,6,7,8-tetrahydrofolate + NH4(+). Functionally, the glycine cleavage system catalyzes the degradation of glycine. The chain is Aminomethyltransferase from Prochlorococcus marinus (strain MIT 9313).